Reading from the N-terminus, the 297-residue chain is 4-hydroxy-tetrahydrodipicolinate synthase (297 aa).

T47 serves as a coordination point for pyruvate. The Proton donor/acceptor role is filled by Y135. Residue K163 is the Schiff-base intermediate with substrate of the active site. I205 provides a ligand contact to pyruvate.

It belongs to the DapA family. As to quaternary structure, homotetramer; dimer of dimers.

It localises to the cytoplasm. It carries out the reaction L-aspartate 4-semialdehyde + pyruvate = (2S,4S)-4-hydroxy-2,3,4,5-tetrahydrodipicolinate + H2O + H(+). It participates in amino-acid biosynthesis; L-lysine biosynthesis via DAP pathway; (S)-tetrahydrodipicolinate from L-aspartate: step 3/4. Its function is as follows. Catalyzes the condensation of (S)-aspartate-beta-semialdehyde [(S)-ASA] and pyruvate to 4-hydroxy-tetrahydrodipicolinate (HTPA). The protein is 4-hydroxy-tetrahydrodipicolinate synthase of Dehalococcoides mccartyi (strain ATCC BAA-2266 / KCTC 15142 / 195) (Dehalococcoides ethenogenes (strain 195)).